The chain runs to 779 residues: Phosphoribosylformylglycinamidine synthase subunit PurL (779 aa).

Residue H52 is part of the active site. ATP-binding residues include Y55 and K94. E96 is a binding site for Mg(2+). Substrate contacts are provided by residues 97-100 (SHNH) and R119. H98 acts as the Proton acceptor in catalysis. D120 lines the Mg(2+) pocket. Q243 is a substrate binding site. D271 serves as a coordination point for Mg(2+). A substrate-binding site is contributed by 315 to 317 (ESQ). ATP contacts are provided by N523 and G560. N561 provides a ligand contact to Mg(2+). S563 lines the substrate pocket.

It belongs to the FGAMS family. As to quaternary structure, monomer. Part of the FGAM synthase complex composed of 1 PurL, 1 PurQ and 2 PurS subunits.

Its subcellular location is the cytoplasm. It carries out the reaction N(2)-formyl-N(1)-(5-phospho-beta-D-ribosyl)glycinamide + L-glutamine + ATP + H2O = 2-formamido-N(1)-(5-O-phospho-beta-D-ribosyl)acetamidine + L-glutamate + ADP + phosphate + H(+). Its pathway is purine metabolism; IMP biosynthesis via de novo pathway; 5-amino-1-(5-phospho-D-ribosyl)imidazole from N(2)-formyl-N(1)-(5-phospho-D-ribosyl)glycinamide: step 1/2. Its function is as follows. Part of the phosphoribosylformylglycinamidine synthase complex involved in the purines biosynthetic pathway. Catalyzes the ATP-dependent conversion of formylglycinamide ribonucleotide (FGAR) and glutamine to yield formylglycinamidine ribonucleotide (FGAM) and glutamate. The FGAM synthase complex is composed of three subunits. PurQ produces an ammonia molecule by converting glutamine to glutamate. PurL transfers the ammonia molecule to FGAR to form FGAM in an ATP-dependent manner. PurS interacts with PurQ and PurL and is thought to assist in the transfer of the ammonia molecule from PurQ to PurL. The polypeptide is Phosphoribosylformylglycinamidine synthase subunit PurL (Prochlorococcus marinus (strain MIT 9515)).